The primary structure comprises 140 residues: Nucleoside diphosphate kinase (140 aa).

Residues lysine 11, phenylalanine 59, arginine 87, threonine 93, arginine 104, and asparagine 114 each coordinate ATP. Histidine 117 acts as the Pros-phosphohistidine intermediate in catalysis.

It belongs to the NDK family. In terms of assembly, homotetramer. Requires Mg(2+) as cofactor.

It is found in the cytoplasm. It carries out the reaction a 2'-deoxyribonucleoside 5'-diphosphate + ATP = a 2'-deoxyribonucleoside 5'-triphosphate + ADP. The catalysed reaction is a ribonucleoside 5'-diphosphate + ATP = a ribonucleoside 5'-triphosphate + ADP. Its function is as follows. Major role in the synthesis of nucleoside triphosphates other than ATP. The ATP gamma phosphate is transferred to the NDP beta phosphate via a ping-pong mechanism, using a phosphorylated active-site intermediate. This is Nucleoside diphosphate kinase from Rhizobium etli (strain CIAT 652).